Reading from the N-terminus, the 505-residue chain is Lysine--tRNA ligase (505 aa).

The Mg(2+) site is built by Glu415 and Glu422.

It belongs to the class-II aminoacyl-tRNA synthetase family. Homodimer. The cofactor is Mg(2+).

The protein resides in the cytoplasm. The catalysed reaction is tRNA(Lys) + L-lysine + ATP = L-lysyl-tRNA(Lys) + AMP + diphosphate. This is Lysine--tRNA ligase from Salmonella paratyphi C (strain RKS4594).